A 211-amino-acid chain; its full sequence is MELEDIRRDYSLGGLRRADLPQEPVELFELWLKQAVEAKLTDPTAMTVATVDENGQPFQRIVLLKHFDKTGFVFYTNLGSRKAQQLEQHSKISLHFPWHPLERQVHITGTAEKLTALENMKYFTSRPKESQIAAWASKQSSRLTARAALEGKYLELKQKFAKGEIPVPKFWGGFRIKIDSIEFWQGGDHRLHDRFLYSKDQNDWQIDRLAP.

Residues 7–10 (RRDY) and K65 contribute to the substrate site. FMN is bound by residues 60–65 (RIVLLK), 75–76 (YT), R81, K82, and Q104. Residues Y122, R126, and S130 each coordinate substrate. FMN-binding positions include 139–140 (QS) and W184. Residue 190–192 (RLH) coordinates substrate. FMN is bound at residue R194.

Belongs to the pyridoxamine 5'-phosphate oxidase family. Homodimer. FMN is required as a cofactor.

The enzyme catalyses pyridoxamine 5'-phosphate + O2 + H2O = pyridoxal 5'-phosphate + H2O2 + NH4(+). It carries out the reaction pyridoxine 5'-phosphate + O2 = pyridoxal 5'-phosphate + H2O2. It participates in cofactor metabolism; pyridoxal 5'-phosphate salvage; pyridoxal 5'-phosphate from pyridoxamine 5'-phosphate: step 1/1. It functions in the pathway cofactor metabolism; pyridoxal 5'-phosphate salvage; pyridoxal 5'-phosphate from pyridoxine 5'-phosphate: step 1/1. Catalyzes the oxidation of either pyridoxine 5'-phosphate (PNP) or pyridoxamine 5'-phosphate (PMP) into pyridoxal 5'-phosphate (PLP). This Aliivibrio fischeri (strain ATCC 700601 / ES114) (Vibrio fischeri) protein is Pyridoxine/pyridoxamine 5'-phosphate oxidase.